A 445-amino-acid chain; its full sequence is Phosphoglucosamine mutase (445 aa).

Catalysis depends on S102, which acts as the Phosphoserine intermediate. Mg(2+)-binding residues include S102, D241, D243, and D245. Position 102 is a phosphoserine (S102).

The protein belongs to the phosphohexose mutase family. The cofactor is Mg(2+). Post-translationally, activated by phosphorylation.

The catalysed reaction is alpha-D-glucosamine 1-phosphate = D-glucosamine 6-phosphate. Its function is as follows. Catalyzes the conversion of glucosamine-6-phosphate to glucosamine-1-phosphate. In Haemophilus influenzae (strain ATCC 51907 / DSM 11121 / KW20 / Rd), this protein is Phosphoglucosamine mutase.